The chain runs to 145 residues: Synaptojanin-2-binding protein (145 aa).

Residues 1 to 117 (MNGRVDYLVT…GHRGEGDPSG (117 aa)) lie on the Cytoplasmic side of the membrane. Residues 13-100 (EINLTRGPSG…AVSLRVQHRL (88 aa)) form the PDZ domain. Residues 118-138 (IPIFMVLVPVFALTMVAAWAF) form a helical membrane-spanning segment. Topologically, residues 139 to 145 (MRYRQQL) are mitochondrial intermembrane.

In terms of assembly, binds (via the PDZ domain) to isoform 2A of SYNJ2 (via the unique motif in the C-terminus). Interacts (via C-terminus) with RALBP1. Interacts (via PDZ domain) with ACVR2A (via C-terminus) and ACVR2B (via C-terminus). Forms a ternary complex with ACVR2A and RALBP1. Interacts with MAPK12. Interacts with DLL1; enhances DLL1 protein stability, and promotes notch signaling in endothelial cells.

It is found in the mitochondrion outer membrane. Regulates endocytosis of activin type 2 receptor kinases through the Ral/RALBP1-dependent pathway and may be involved in suppression of activin-induced signal transduction. This chain is Synaptojanin-2-binding protein (SYNJ2BP), found in Homo sapiens (Human).